A 430-amino-acid chain; its full sequence is Trigger factor (430 aa).

A PPIase FKBP-type domain is found at 165–250 (TDIAIFDFEG…LHQIKTKKIP (86 aa)).

It belongs to the FKBP-type PPIase family. Tig subfamily.

The protein resides in the cytoplasm. It catalyses the reaction [protein]-peptidylproline (omega=180) = [protein]-peptidylproline (omega=0). In terms of biological role, involved in protein export. Acts as a chaperone by maintaining the newly synthesized protein in an open conformation. Functions as a peptidyl-prolyl cis-trans isomerase. The protein is Trigger factor of Onion yellows phytoplasma (strain OY-M).